Consider the following 131-residue polypeptide: uncharacterized protein (131 aa).

2 consecutive transmembrane segments (helical) span residues 52–72 (LIMI…FYLV) and 97–117 (SDII…YDVG).

Its subcellular location is the membrane. This is an uncharacterized protein from Acanthamoeba polyphaga mimivirus (APMV).